Consider the following 332-residue polypeptide: Malate dehydrogenase, cytoplasmic (332 aa).

NAD(+) is bound by residues 11–17 (GAAGQIA) and D42. Substrate-binding residues include R92 and R98. NAD(+)-binding positions include N105, Q112, and 129 to 131 (VGN). Positions 131 and 162 each coordinate substrate. The Proton acceptor role is filled by H187.

This sequence belongs to the LDH/MDH superfamily. MDH type 2 family. In terms of assembly, homodimer.

The protein localises to the cytoplasm. The catalysed reaction is (S)-malate + NAD(+) = oxaloacetate + NADH + H(+). Its activity is regulated as follows. By arsenate for both the forward and reverse reactions. Functionally, malate dehydrogenase. Has no activity with NADPH as substrate. Does not show lactate dehydrogenase activity. This is Malate dehydrogenase, cytoplasmic from Taenia solium (Pork tapeworm).